The following is a 508-amino-acid chain: ATP synthase subunit alpha (508 aa).

171-178 (GDRQTGKT) is an ATP binding site.

Belongs to the ATPase alpha/beta chains family. F-type ATPases have 2 components, CF(1) - the catalytic core - and CF(0) - the membrane proton channel. CF(1) has five subunits: alpha(3), beta(3), gamma(1), delta(1), epsilon(1). CF(0) has three main subunits: a(1), b(2) and c(9-12). The alpha and beta chains form an alternating ring which encloses part of the gamma chain. CF(1) is attached to CF(0) by a central stalk formed by the gamma and epsilon chains, while a peripheral stalk is formed by the delta and b chains.

It localises to the cell membrane. It carries out the reaction ATP + H2O + 4 H(+)(in) = ADP + phosphate + 5 H(+)(out). Its function is as follows. Produces ATP from ADP in the presence of a proton gradient across the membrane. The alpha chain is a regulatory subunit. The chain is ATP synthase subunit alpha from Protochlamydia amoebophila (strain UWE25).